Consider the following 263-residue polypeptide: uncharacterized protein (263 aa).

The Response regulatory domain maps to 6–121 (TAIIADDEPL…RLQTTCERVK (116 aa)). Asp-58 bears the 4-aspartylphosphate mark. The region spanning 158–263 (IKATQGDDIH…RASQSLFKGM (106 aa)) is the HTH LytTR-type domain.

This is an uncharacterized protein from Vibrio parahaemolyticus serotype O3:K6 (strain RIMD 2210633).